The following is a 208-amino-acid chain: Small ribosomal subunit protein uS4 (208 aa).

Residues 30 to 49 (KSALEKRPYPPGQHGQRRSK) form a disordered region. The S4 RNA-binding domain occupies 98–161 (RRLDNVVYRM…KNNPQIQRSL (64 aa)).

This sequence belongs to the universal ribosomal protein uS4 family. In terms of assembly, part of the 30S ribosomal subunit. Contacts protein S5. The interaction surface between S4 and S5 is involved in control of translational fidelity.

One of the primary rRNA binding proteins, it binds directly to 16S rRNA where it nucleates assembly of the body of the 30S subunit. In terms of biological role, with S5 and S12 plays an important role in translational accuracy. The polypeptide is Small ribosomal subunit protein uS4 (Nitratiruptor sp. (strain SB155-2)).